The following is a 332-amino-acid chain: Anthranilate phosphoribosyltransferase (332 aa).

5-phospho-alpha-D-ribose 1-diphosphate-binding positions include Gly79, 82–83 (GD), Ser87, 89–92 (NIST), 107–115 (KHGNRSVSS), and Ser119. Gly79 is a binding site for anthranilate. Residue Ser91 participates in Mg(2+) binding. Asn110 is an anthranilate binding site. Residue Arg165 participates in anthranilate binding. Asp223 and Glu224 together coordinate Mg(2+).

The protein belongs to the anthranilate phosphoribosyltransferase family. In terms of assembly, homodimer. The cofactor is Mg(2+).

The catalysed reaction is N-(5-phospho-beta-D-ribosyl)anthranilate + diphosphate = 5-phospho-alpha-D-ribose 1-diphosphate + anthranilate. It participates in amino-acid biosynthesis; L-tryptophan biosynthesis; L-tryptophan from chorismate: step 2/5. Its function is as follows. Catalyzes the transfer of the phosphoribosyl group of 5-phosphorylribose-1-pyrophosphate (PRPP) to anthranilate to yield N-(5'-phosphoribosyl)-anthranilate (PRA). This chain is Anthranilate phosphoribosyltransferase, found in Yersinia pseudotuberculosis serotype O:3 (strain YPIII).